Reading from the N-terminus, the 103-residue chain is Glycoprotein 24B (103 aa).

Belongs to the csb family. In terms of processing, O-glycosylated.

The protein resides in the cell surface. Its function is as follows. Cell-cell adhesion during early development. In Dictyostelium discoideum (Social amoeba), this protein is Glycoprotein 24B (csbB).